The sequence spans 309 residues: Probable HTH-type transcriptional regulator LtrA (309 aa).

Positions Met1–Ser61 constitute an HTH lysR-type domain. The H-T-H motif DNA-binding region spans Phe21–Ser40.

It belongs to the LysR transcriptional regulatory family.

The protein is Probable HTH-type transcriptional regulator LtrA (ltrA) of Klebsiella pneumoniae.